A 278-amino-acid chain; its full sequence is 4-diphosphocytidyl-2-C-methyl-D-erythritol kinase (278 aa).

Lys-10 is an active-site residue. 93 to 103 (PMGGGLGGGSS) lines the ATP pocket. Asp-135 is an active-site residue.

This sequence belongs to the GHMP kinase family. IspE subfamily.

The catalysed reaction is 4-CDP-2-C-methyl-D-erythritol + ATP = 4-CDP-2-C-methyl-D-erythritol 2-phosphate + ADP + H(+). It participates in isoprenoid biosynthesis; isopentenyl diphosphate biosynthesis via DXP pathway; isopentenyl diphosphate from 1-deoxy-D-xylulose 5-phosphate: step 3/6. Functionally, catalyzes the phosphorylation of the position 2 hydroxy group of 4-diphosphocytidyl-2C-methyl-D-erythritol. The polypeptide is 4-diphosphocytidyl-2-C-methyl-D-erythritol kinase (Thiobacillus denitrificans (strain ATCC 25259 / T1)).